We begin with the raw amino-acid sequence, 429 residues long: MTTSAQLFEQACRHIPGGVNSPVRAFKGMERAPVFVERAQGAYLYDVEGQRYIDYVGSWGPLITGHADPDVLGAVRSRLDDGLSFGTPTAIETRMAELICEIMPSIDMVRMVNSGTEATMSAIRLARGHTGRDKIVKFEGNYHGHSDSLLVKAGSGALTHGEPSSPGVPASLAEHTVTLPYNDLDAVRACFAELGDEIAGIIVEPVAGNMNCIPPQPDFLKGLREICDVHGSVLIFDEVMTGFRVALGGAQAHFGVTPDLTCLGKIVGGGMPVGAFGGTREIMEQLSPLGPIYQAGTLAGNPLAMAAGIALLEKIRQPGFHDALAERVATLCDGLEARAREAGVDLITQRAGGMFGVFFTAQQRVDNFAQATACNADTFRRFFLGMLEHGVYLAPSPFEAGFMSSAHTPDDIQATLDAAEQVLATLENA.

K265 carries the N6-(pyridoxal phosphate)lysine modification.

It belongs to the class-III pyridoxal-phosphate-dependent aminotransferase family. HemL subfamily. In terms of assembly, homodimer. The cofactor is pyridoxal 5'-phosphate.

The protein localises to the cytoplasm. The catalysed reaction is (S)-4-amino-5-oxopentanoate = 5-aminolevulinate. Its pathway is porphyrin-containing compound metabolism; protoporphyrin-IX biosynthesis; 5-aminolevulinate from L-glutamyl-tRNA(Glu): step 2/2. The polypeptide is Glutamate-1-semialdehyde 2,1-aminomutase (Chromohalobacter salexigens (strain ATCC BAA-138 / DSM 3043 / CIP 106854 / NCIMB 13768 / 1H11)).